A 143-amino-acid chain; its full sequence is Large ribosomal subunit protein uL16c (143 aa).

The protein belongs to the universal ribosomal protein uL16 family. Part of the 50S ribosomal subunit.

Its subcellular location is the plastid. It is found in the chloroplast. The chain is Large ribosomal subunit protein uL16c from Chlorokybus atmophyticus (Soil alga).